We begin with the raw amino-acid sequence, 103 residues long: Small ribosomal subunit protein uS10 (103 aa).

The protein belongs to the universal ribosomal protein uS10 family. In terms of assembly, part of the 30S ribosomal subunit.

Its function is as follows. Involved in the binding of tRNA to the ribosomes. This Wigglesworthia glossinidia brevipalpis protein is Small ribosomal subunit protein uS10.